A 319-amino-acid chain; its full sequence is Transmembrane and ubiquitin-like domain-containing protein 2 (319 aa).

The chain crosses the membrane as a helical span at residues 36–56 (VMVVAGVVALTLALVLAWLST). Disordered stretches follow at residues 88-128 (VNQG…ARGE) and 145-165 (RQAG…DGSC). Basic and acidic residues predominate over residues 95 to 111 (PTEHPHPSGGNDDKAEE). One can recognise a Ubiquitin-like domain in the interval 173-246 (INVRLKFLND…IHCHRSPPGA (74 aa)). The next 2 helical transmembrane spans lie at 264–284 (LGVN…GVVW) and 298–318 (ATIS…GMYG).

It localises to the membrane. The polypeptide is Transmembrane and ubiquitin-like domain-containing protein 2 (Tmub2) (Mus musculus (Mouse)).